Reading from the N-terminus, the 361-residue chain is 3-dehydroquinate synthase (361 aa).

NAD(+) contacts are provided by residues 104–108 (GVIGD), 128–129 (TT), K141, K150, and 168–171 (FLRT). Residues E183, H246, and H263 each coordinate Zn(2+).

Belongs to the sugar phosphate cyclases superfamily. Dehydroquinate synthase family. The cofactor is Co(2+). Requires Zn(2+) as cofactor. It depends on NAD(+) as a cofactor.

It localises to the cytoplasm. It carries out the reaction 7-phospho-2-dehydro-3-deoxy-D-arabino-heptonate = 3-dehydroquinate + phosphate. It functions in the pathway metabolic intermediate biosynthesis; chorismate biosynthesis; chorismate from D-erythrose 4-phosphate and phosphoenolpyruvate: step 2/7. Catalyzes the conversion of 3-deoxy-D-arabino-heptulosonate 7-phosphate (DAHP) to dehydroquinate (DHQ). The sequence is that of 3-dehydroquinate synthase from Opitutus terrae (strain DSM 11246 / JCM 15787 / PB90-1).